A 1801-amino-acid polypeptide reads, in one-letter code: Protein mono-ADP-ribosyltransferase PARP14 (1801 aa).

Serine 33 bears the Phosphoserine mark. The disordered stretch occupies residues 109–132; sequence SKTKEDVKEPDVSEELDTKLPLDG. Macro domains are found at residues 791–978, 1003–1190, and 1216–1387; these read KCFS…KTVF, WEKG…ARRA, and DSGV…KKRE. Residues asparagine 824, leucine 833, 922 to 926, aspartate 961, 1023 to 1024, serine 1034, 1046 to 1049, 1133 to 1137, 1175 to 1178, 1235 to 1236, serine 1247, valine 1258, 1332 to 1336, and phenylalanine 1371 contribute to the a glycoprotein site; these read SSGVF, VQ, LSKS, GTGNL, DHEN, DI, and GTGNA. Residues serine 1403 and serine 1411 each carry the phosphoserine modification. The 79-residue stretch at 1523–1601 folds into the WWE domain; it reads EQESRADCIS…SLSVQRLTKS (79 aa). The region spanning 1605–1801 is the PARP catalytic domain; that stretch reads IPAHWSDMKQ…YPEYLITFRK (197 aa).

Belongs to the ARTD/PARP family. In terms of assembly, interacts with STAT6. Interacts with PARP10. Interacts with PARP9 in IFNG-stimulated macrophages; the interaction prevents PARP14-mediated STAT1 and STAT6 ADP-riboslylation. Post-translationally, auto-ADP-ribosylated. As to expression, expressed in macrophages.

It is found in the nucleus. Its subcellular location is the cytoplasm. It catalyses the reaction L-glutamyl-[protein] + NAD(+) = 5-O-(ADP-D-ribosyl)-L-glutamyl-[protein] + nicotinamide. In terms of biological role, ADP-ribosyltransferase that mediates mono-ADP-ribosylation of glutamate residues on target proteins. In contrast to PARP1 and PARP2, it is not able to mediate poly-ADP-ribosylation. Has been shown to catalyze the mono-ADP-ribosylation of STAT1 at 'Glu-657' and 'Glu-705', thus decreasing STAT1 phosphorylation which negatively regulates pro-inflammatory cytokine production in macrophages in response to IFNG stimulation. However, the role of ADP-ribosylation in the prevention of STAT1 phosphorylation has been called into question and it has been suggested that the inhibition of phosphorylation may be the result of sumoylation of STAT1 'Lys-703'. Mono-ADP-ribosylates STAT6; enhancing STAT6-dependent transcription. In macrophages, positively regulates MRC1 expression in response to IL4 stimulation by promoting STAT6 phosphorylation. Mono-ADP-ribosylates PARP9. The polypeptide is Protein mono-ADP-ribosyltransferase PARP14 (Homo sapiens (Human)).